The sequence spans 230 residues: Somatolactin (230 aa).

The signal sequence occupies residues 1-23 (MNMMTVKQGVWAALLWPYLLAAS). Disulfide bonds link cysteine 28/cysteine 38, cysteine 88/cysteine 204, and cysteine 221/cysteine 229. Asparagine 137 and asparagine 144 each carry an N-linked (GlcNAc...) asparagine glycan.

This sequence belongs to the somatotropin/prolactin family.

The protein resides in the secreted. The polypeptide is Somatolactin (Hippoglossus hippoglossus (Atlantic halibut)).